Here is a 311-residue protein sequence, read N- to C-terminus: Ribosomal RNA small subunit methyltransferase H (311 aa).

S-adenosyl-L-methionine contacts are provided by residues 33–35, aspartate 53, phenylalanine 80, aspartate 101, and glutamine 108; that span reads AGH.

It belongs to the methyltransferase superfamily. RsmH family.

It is found in the cytoplasm. It catalyses the reaction cytidine(1402) in 16S rRNA + S-adenosyl-L-methionine = N(4)-methylcytidine(1402) in 16S rRNA + S-adenosyl-L-homocysteine + H(+). Specifically methylates the N4 position of cytidine in position 1402 (C1402) of 16S rRNA. This is Ribosomal RNA small subunit methyltransferase H from Alkaliphilus oremlandii (strain OhILAs) (Clostridium oremlandii (strain OhILAs)).